The chain runs to 651 residues: UvrABC system protein B (651 aa).

The region spanning Arg-25–Ile-411 is the Helicase ATP-binding domain. Position 38-45 (Gly-38–Thr-45) interacts with ATP. The Beta-hairpin signature appears at Tyr-91–Ile-114. The region spanning Asp-427–Val-591 is the Helicase C-terminal domain. The interval Thr-593–Ala-615 is disordered. Residues Asn-616–Pro-651 form the UVR domain.

This sequence belongs to the UvrB family. Forms a heterotetramer with UvrA during the search for lesions. Interacts with UvrC in an incision complex.

It localises to the cytoplasm. In terms of biological role, the UvrABC repair system catalyzes the recognition and processing of DNA lesions. A damage recognition complex composed of 2 UvrA and 2 UvrB subunits scans DNA for abnormalities. Upon binding of the UvrA(2)B(2) complex to a putative damaged site, the DNA wraps around one UvrB monomer. DNA wrap is dependent on ATP binding by UvrB and probably causes local melting of the DNA helix, facilitating insertion of UvrB beta-hairpin between the DNA strands. Then UvrB probes one DNA strand for the presence of a lesion. If a lesion is found the UvrA subunits dissociate and the UvrB-DNA preincision complex is formed. This complex is subsequently bound by UvrC and the second UvrB is released. If no lesion is found, the DNA wraps around the other UvrB subunit that will check the other stand for damage. In Anaplasma marginale (strain St. Maries), this protein is UvrABC system protein B.